A 245-amino-acid chain; its full sequence is Putative binding protein HI_1525 (245 aa).

A signal peptide spans 1–19 (MKKLVAVTSMILTTFSVQA). Residues Ser56 and Val163 each contribute to the molybdate site.

Belongs to the bacterial solute-binding protein ModA family.

The protein resides in the periplasm. Probably involved in the binding-dependent system. This is Putative binding protein HI_1525 from Haemophilus influenzae (strain ATCC 51907 / DSM 11121 / KW20 / Rd).